Reading from the N-terminus, the 239-residue chain is 4-hydroxy-tetrahydrodipicolinate reductase (239 aa).

NAD(+)-binding positions include 8-13 (GSTGKM), 78-80 (GTT), and 102-105 (SANM). His-134 functions as the Proton donor/acceptor in the catalytic mechanism. Position 135 (His-135) interacts with (S)-2,3,4,5-tetrahydrodipicolinate. Catalysis depends on Lys-138, which acts as the Proton donor. 144–145 (GT) is a binding site for (S)-2,3,4,5-tetrahydrodipicolinate.

This sequence belongs to the DapB family.

It localises to the cytoplasm. The catalysed reaction is (S)-2,3,4,5-tetrahydrodipicolinate + NAD(+) + H2O = (2S,4S)-4-hydroxy-2,3,4,5-tetrahydrodipicolinate + NADH + H(+). The enzyme catalyses (S)-2,3,4,5-tetrahydrodipicolinate + NADP(+) + H2O = (2S,4S)-4-hydroxy-2,3,4,5-tetrahydrodipicolinate + NADPH + H(+). It participates in amino-acid biosynthesis; L-lysine biosynthesis via DAP pathway; (S)-tetrahydrodipicolinate from L-aspartate: step 4/4. Functionally, catalyzes the conversion of 4-hydroxy-tetrahydrodipicolinate (HTPA) to tetrahydrodipicolinate. The sequence is that of 4-hydroxy-tetrahydrodipicolinate reductase from Rickettsia conorii (strain ATCC VR-613 / Malish 7).